Consider the following 746-residue polypeptide: NAD(P)H-quinone oxidoreductase subunit 5, chloroplastic (746 aa).

The next 16 membrane-spanning stretches (helical) occupy residues 9-29, 40-60, 89-109, 125-145, 147-167, 185-205, 221-241, 258-278, 280-300, 327-347, 354-374, 396-416, 425-445, 547-567, 608-628, and 723-743; these read WIIPFIPLPVPILLGVGLLLF, WTFLSIFLLSIVMIFSIYLSI, IDPLTSIMSILITTVGILVLI, FAYMGFFNTSMLGLVTSSNLI, VYFFWELVGMCSYLLIGFWFT, GDFGLLLGILGLYWITGSFEF, VNLLFLTLCAFLLFVGPIAKS, TPISALIHAATMVAAGIFLVA, LLPLFIVIPSIMYIISLIGII, LGYMMLALGMGSYRSALFHLI, ALLFLGSGSIIHSMEAIVGYS, TAFLIGTLSLCGIPPLACFWS, LLFSPIFAIIACSTAGLTAFY, ILFPMLILVLFTLFIGAIGIP, FSVSIAFFGIFIAYCLYKPFY, and YLFLYLSYVLIFLMILFFFYF.

This sequence belongs to the complex I subunit 5 family. NDH is composed of at least 16 different subunits, 5 of which are encoded in the nucleus.

It localises to the plastid. The protein localises to the chloroplast thylakoid membrane. The catalysed reaction is a plastoquinone + NADH + (n+1) H(+)(in) = a plastoquinol + NAD(+) + n H(+)(out). It catalyses the reaction a plastoquinone + NADPH + (n+1) H(+)(in) = a plastoquinol + NADP(+) + n H(+)(out). In terms of biological role, NDH shuttles electrons from NAD(P)H:plastoquinone, via FMN and iron-sulfur (Fe-S) centers, to quinones in the photosynthetic chain and possibly in a chloroplast respiratory chain. The immediate electron acceptor for the enzyme in this species is believed to be plastoquinone. Couples the redox reaction to proton translocation, and thus conserves the redox energy in a proton gradient. The protein is NAD(P)H-quinone oxidoreductase subunit 5, chloroplastic (ndhF) of Arabidopsis thaliana (Mouse-ear cress).